Here is a 98-residue protein sequence, read N- to C-terminus: Small ribosomal subunit protein bS20 (98 aa).

A compositionally biased stretch (basic residues) spans 1-12 (MAPRKPSKKVGP). The segment at 1-31 (MAPRKPSKKVGPQKRPSAEKRVITSKKKQLR) is disordered.

This sequence belongs to the bacterial ribosomal protein bS20 family.

In terms of biological role, binds directly to 16S ribosomal RNA. This chain is Small ribosomal subunit protein bS20, found in Chlamydia trachomatis serovar A (strain ATCC VR-571B / DSM 19440 / HAR-13).